The sequence spans 341 residues: uncharacterized protein (341 aa).

WD repeat units follow at residues 19 to 59, 106 to 145, 252 to 293, and 303 to 341; these read SLGS…QVHT, GHTDIVSSIEVSPIEDQFVSTANDKTLKLWKMNQSSRCLG, PFSN…HHKG, and VSQSIINPGLVKYNPRYDQLLTAGSQLVFWLPEKYALTS.

It localises to the cytoplasm. Its subcellular location is the nucleus. This is an uncharacterized protein from Schizosaccharomyces pombe (strain 972 / ATCC 24843) (Fission yeast).